The chain runs to 174 residues: NADH-quinone oxidoreductase subunit C (174 aa).

The protein belongs to the complex I 30 kDa subunit family. As to quaternary structure, NDH-1 is composed of 14 different subunits. Subunits NuoB, C, D, E, F, and G constitute the peripheral sector of the complex.

Its subcellular location is the cell membrane. The catalysed reaction is a quinone + NADH + 5 H(+)(in) = a quinol + NAD(+) + 4 H(+)(out). Its function is as follows. NDH-1 shuttles electrons from NADH, via FMN and iron-sulfur (Fe-S) centers, to quinones in the respiratory chain. The immediate electron acceptor for the enzyme in this species is believed to be ubiquinone. Couples the redox reaction to proton translocation (for every two electrons transferred, four hydrogen ions are translocated across the cytoplasmic membrane), and thus conserves the redox energy in a proton gradient. The protein is NADH-quinone oxidoreductase subunit C of Roseiflexus castenholzii (strain DSM 13941 / HLO8).